A 100-amino-acid chain; its full sequence is Trp operon repressor homolog (100 aa).

A DNA-binding region spans residues Gln-59–Ser-82. The segment covering Asn-78–Thr-93 has biased composition (basic and acidic residues). The tract at residues Asn-78–Gln-100 is disordered.

Belongs to the TrpR family. As to quaternary structure, homodimer.

The protein localises to the cytoplasm. Functionally, this protein is an aporepressor. When complexed with L-tryptophan it binds the operator region of the trp operon and prevents the initiation of transcription. This chain is Trp operon repressor homolog, found in Vibrio campbellii (strain ATCC BAA-1116).